A 165-amino-acid chain; its full sequence is Coronafacic acid dehydratase (165 aa).

The active site involves His-62.

Belongs to the thioester dehydratase family.

It participates in phytotoxin biosynthesis; coronatine biosynthesis. This chain is Coronafacic acid dehydratase (cfa2), found in Pseudomonas savastanoi pv. glycinea (Pseudomonas syringae pv. glycinea).